Here is a 466-residue protein sequence, read N- to C-terminus: 3-isopropylmalate dehydratase large subunit (466 aa).

Residues cysteine 345, cysteine 405, and cysteine 408 each contribute to the [4Fe-4S] cluster site.

The protein belongs to the aconitase/IPM isomerase family. LeuC type 1 subfamily. As to quaternary structure, heterodimer of LeuC and LeuD. [4Fe-4S] cluster serves as cofactor.

It carries out the reaction (2R,3S)-3-isopropylmalate = (2S)-2-isopropylmalate. It participates in amino-acid biosynthesis; L-leucine biosynthesis; L-leucine from 3-methyl-2-oxobutanoate: step 2/4. Functionally, catalyzes the isomerization between 2-isopropylmalate and 3-isopropylmalate, via the formation of 2-isopropylmaleate. This Microcystis aeruginosa (strain NIES-843 / IAM M-2473) protein is 3-isopropylmalate dehydratase large subunit.